A 579-amino-acid chain; its full sequence is V-type ATP synthase alpha chain (579 aa).

Residue 227-234 (GGFGTGKT) participates in ATP binding.

It belongs to the ATPase alpha/beta chains family.

It catalyses the reaction ATP + H2O + 4 H(+)(in) = ADP + phosphate + 5 H(+)(out). Functionally, produces ATP from ADP in the presence of a proton gradient across the membrane. The V-type alpha chain is a catalytic subunit. The protein is V-type ATP synthase alpha chain of Anaeromyxobacter dehalogenans (strain 2CP-1 / ATCC BAA-258).